Here is a 230-residue protein sequence, read N- to C-terminus: UPF0502 protein Oter_3715 (230 aa).

The protein belongs to the UPF0502 family.

This chain is UPF0502 protein Oter_3715, found in Opitutus terrae (strain DSM 11246 / JCM 15787 / PB90-1).